A 211-amino-acid polypeptide reads, in one-letter code: Large ribosomal subunit protein bL25 (211 aa).

The disordered stretch occupies residues 185–211 (ESTTPAATEGEETEAAAAAPEPAAEDK). Over residues 199 to 211 (AAAAAPEPAAEDK) the composition is skewed to low complexity.

It belongs to the bacterial ribosomal protein bL25 family. CTC subfamily. Part of the 50S ribosomal subunit; part of the 5S rRNA/L5/L18/L25 subcomplex. Contacts the 5S rRNA. Binds to the 5S rRNA independently of L5 and L18.

This is one of the proteins that binds to the 5S RNA in the ribosome where it forms part of the central protuberance. This chain is Large ribosomal subunit protein bL25, found in Treponema denticola (strain ATCC 35405 / DSM 14222 / CIP 103919 / JCM 8153 / KCTC 15104).